We begin with the raw amino-acid sequence, 364 residues long: Mannose-1-phosphate guanyltransferase (364 aa).

It belongs to the transferase hexapeptide repeat family.

It localises to the cytoplasm. It catalyses the reaction alpha-D-mannose 1-phosphate + GTP + H(+) = GDP-alpha-D-mannose + diphosphate. It participates in nucleotide-sugar biosynthesis; GDP-alpha-D-mannose biosynthesis; GDP-alpha-D-mannose from alpha-D-mannose 1-phosphate (GTP route): step 1/1. Functionally, involved in cell wall synthesis where it is required for glycosylation. Involved in cell cycle progression through cell-size checkpoint. The sequence is that of Mannose-1-phosphate guanyltransferase (mpg-1) from Neurospora crassa (strain ATCC 24698 / 74-OR23-1A / CBS 708.71 / DSM 1257 / FGSC 987).